The sequence spans 443 residues: ATP-dependent protease ATPase subunit HslU (443 aa).

Residues Ile20, 62-67 (GVGKTE), Asp255, Glu321, and Arg393 contribute to the ATP site.

This sequence belongs to the ClpX chaperone family. HslU subfamily. In terms of assembly, a double ring-shaped homohexamer of HslV is capped on each side by a ring-shaped HslU homohexamer. The assembly of the HslU/HslV complex is dependent on binding of ATP.

The protein resides in the cytoplasm. In terms of biological role, ATPase subunit of a proteasome-like degradation complex; this subunit has chaperone activity. The binding of ATP and its subsequent hydrolysis by HslU are essential for unfolding of protein substrates subsequently hydrolyzed by HslV. HslU recognizes the N-terminal part of its protein substrates and unfolds these before they are guided to HslV for hydrolysis. This is ATP-dependent protease ATPase subunit HslU from Helicobacter pylori (strain P12).